The sequence spans 213 residues: Non-structural protein NP-1 (213 aa).

Residues 1–80 (MERSRSPRET…ATRKETATKK (80 aa)) are disordered. Composition is skewed to basic and acidic residues over residues 15 to 33 (SRDK…ERTR) and 43 to 58 (AHGE…REKN).

This sequence belongs to the Bocaparvovirus Non-structural protein NP-1 family.

It localises to the host nucleus. Functionally, required for the expression of the capsid proteins. Performs the splicing and internal polyadenylation of the viral capsid-encoding mRNA precursor, which allows its maturation and expression. Transactivates the viral promoter. The chain is Non-structural protein NP-1 (NP1) from Bos taurus (Bovine).